A 360-amino-acid chain; its full sequence is Ribosomal RNA large subunit methyltransferase M (360 aa).

S-adenosyl-L-methionine contacts are provided by residues Ser-187, 220 to 223 (CPGG), Asp-239, Asp-259, and Asp-276. The active-site Proton acceptor is the Lys-305.

It belongs to the class I-like SAM-binding methyltransferase superfamily. RNA methyltransferase RlmE family. RlmM subfamily. In terms of assembly, monomer.

The protein resides in the cytoplasm. The catalysed reaction is cytidine(2498) in 23S rRNA + S-adenosyl-L-methionine = 2'-O-methylcytidine(2498) in 23S rRNA + S-adenosyl-L-homocysteine + H(+). Functionally, catalyzes the 2'-O-methylation at nucleotide C2498 in 23S rRNA. In Shewanella pealeana (strain ATCC 700345 / ANG-SQ1), this protein is Ribosomal RNA large subunit methyltransferase M.